A 535-amino-acid polypeptide reads, in one-letter code: Bifunctional purine biosynthesis protein PurH (535 aa).

The MGS-like domain maps to 6–151 (TRLPIRRALI…KNHKDVAIVV (146 aa)).

It belongs to the PurH family.

It catalyses the reaction (6R)-10-formyltetrahydrofolate + 5-amino-1-(5-phospho-beta-D-ribosyl)imidazole-4-carboxamide = 5-formamido-1-(5-phospho-D-ribosyl)imidazole-4-carboxamide + (6S)-5,6,7,8-tetrahydrofolate. The enzyme catalyses IMP + H2O = 5-formamido-1-(5-phospho-D-ribosyl)imidazole-4-carboxamide. Its pathway is purine metabolism; IMP biosynthesis via de novo pathway; 5-formamido-1-(5-phospho-D-ribosyl)imidazole-4-carboxamide from 5-amino-1-(5-phospho-D-ribosyl)imidazole-4-carboxamide (10-formyl THF route): step 1/1. The protein operates within purine metabolism; IMP biosynthesis via de novo pathway; IMP from 5-formamido-1-(5-phospho-D-ribosyl)imidazole-4-carboxamide: step 1/1. The sequence is that of Bifunctional purine biosynthesis protein PurH from Pseudomonas paraeruginosa (strain DSM 24068 / PA7) (Pseudomonas aeruginosa (strain PA7)).